A 290-amino-acid chain; its full sequence is Homeobox protein EMX1 (290 aa).

The homeobox DNA-binding region spans 192 to 251 (PKRIRTAFSPSQLLRLERAFEKNHYVVGAERKQLAGSLSLSETQVKVWFQNRRTKYKRQK). Residues 249–290 (RQKLEEEGPESEQKKKGSHHINRWRIATKQANGEDIDVTSND) are disordered. A compositionally biased stretch (basic and acidic residues) spans 250–263 (QKLEEEGPESEQKK).

Belongs to the EMX homeobox family. As to quaternary structure, interacts with WRD11 (via the N-terminal and the central portion of the protein); the interaction associates EMX1 with GLI3. Cerebral cortex.

Its subcellular location is the nucleus. The protein localises to the cytoplasm. Transcription factor, which in cooperation with EMX2, acts to generate the boundary between the roof and archipallium in the developing brain. May function in combinations with OTX1/2 to specify cell fates in the developing central nervous system. The protein is Homeobox protein EMX1 of Homo sapiens (Human).